The following is a 379-amino-acid chain: UDP-4-amino-4-deoxy-L-arabinose--oxoglutarate aminotransferase (379 aa).

An N6-(pyridoxal phosphate)lysine modification is found at K182.

Belongs to the DegT/DnrJ/EryC1 family. ArnB subfamily. As to quaternary structure, homodimer. Requires pyridoxal 5'-phosphate as cofactor.

The enzyme catalyses UDP-4-amino-4-deoxy-beta-L-arabinose + 2-oxoglutarate = UDP-beta-L-threo-pentopyranos-4-ulose + L-glutamate. It participates in nucleotide-sugar biosynthesis; UDP-4-deoxy-4-formamido-beta-L-arabinose biosynthesis; UDP-4-deoxy-4-formamido-beta-L-arabinose from UDP-alpha-D-glucuronate: step 2/3. It functions in the pathway bacterial outer membrane biogenesis; lipopolysaccharide biosynthesis. In terms of biological role, catalyzes the conversion of UDP-4-keto-arabinose (UDP-Ara4O) to UDP-4-amino-4-deoxy-L-arabinose (UDP-L-Ara4N). The modified arabinose is attached to lipid A and is required for resistance to polymyxin and cationic antimicrobial peptides. This Salmonella heidelberg (strain SL476) protein is UDP-4-amino-4-deoxy-L-arabinose--oxoglutarate aminotransferase.